A 340-amino-acid polypeptide reads, in one-letter code: Mitochondrial import receptor subunit TOM40 homolog 2 (340 aa).

The tract at residues 1–37 (MGNVMASTADAESSRGRGHLSAGLRLPEAPQYSGGVP) is disordered.

Belongs to the Tom40 family. In terms of assembly, forms part of the preprotein translocase of the outer mitochondrial membrane (TOM complex). Interacts with mitochondrial targeting sequences. In terms of tissue distribution, only expressed in the male germline, detected in primary spermatocytes as well as post-meiotic stages. Not detected in stem cells and spermatogonia near the tip of the testis.

The protein resides in the mitochondrion outer membrane. Channel-forming protein essential for import of protein precursors into mitochondria. This chain is Mitochondrial import receptor subunit TOM40 homolog 2, found in Drosophila melanogaster (Fruit fly).